The sequence spans 304 residues: Probable 5-dehydro-4-deoxyglucarate dehydratase (304 aa).

This sequence belongs to the DapA family.

It carries out the reaction 5-dehydro-4-deoxy-D-glucarate + H(+) = 2,5-dioxopentanoate + CO2 + H2O. Its pathway is carbohydrate acid metabolism; D-glucarate degradation; 2,5-dioxopentanoate from D-glucarate: step 2/2. The polypeptide is Probable 5-dehydro-4-deoxyglucarate dehydratase (Methylobacterium radiotolerans (strain ATCC 27329 / DSM 1819 / JCM 2831 / NBRC 15690 / NCIMB 10815 / 0-1)).